Reading from the N-terminus, the 705-residue chain is Methionine--tRNA ligase (705 aa).

A 'HIGH' region motif is present at residues 17–27 (PYANGPVHLGH). Positions 149, 152, 162, and 165 each coordinate Zn(2+). Positions 347-351 (KFSKS) match the 'KMSKS' region motif. Lysine 350 is an ATP binding site. The tRNA-binding domain maps to 604-705 (EFQKVDLRVA…GEGINGQSVQ (102 aa)).

Belongs to the class-I aminoacyl-tRNA synthetase family. MetG type 1 subfamily. In terms of assembly, homodimer. Zn(2+) is required as a cofactor.

It localises to the cytoplasm. The catalysed reaction is tRNA(Met) + L-methionine + ATP = L-methionyl-tRNA(Met) + AMP + diphosphate. Is required not only for elongation of protein synthesis but also for the initiation of all mRNA translation through initiator tRNA(fMet) aminoacylation. The chain is Methionine--tRNA ligase from Chlorobium chlorochromatii (strain CaD3).